A 159-amino-acid polypeptide reads, in one-letter code: Single-stranded DNA-binding protein 2 (159 aa).

One can recognise an SSB domain in the interval 2–104 (MNRVVLVGRL…VVAESVQFLE (103 aa)). Residues 106-159 (RNHAEGATSNNYQNEANYSNNNKTSSYRADTSQKSDSFANEGKPIDINPDDLPF) form a disordered region. Residues 114–127 (SNNYQNEANYSNNN) show a composition bias toward low complexity. Residues 128–143 (KTSSYRADTSQKSDSF) are compositionally biased toward polar residues.

In terms of assembly, homotetramer.

The polypeptide is Single-stranded DNA-binding protein 2 (ssb2) (Listeria innocua serovar 6a (strain ATCC BAA-680 / CLIP 11262)).